Consider the following 538-residue polypeptide: Fructooligosaccharide ABC transporter substrate-binding protein FusA (538 aa).

An N-terminal signal peptide occupies residues 1–22 (MKFKTFSKSAVLLTASLAVLAA). C23 carries the N-palmitoyl cysteine lipid modification. C23 is lipidated: S-diacylglycerol cysteine. Position 167 (E167) interacts with substrate. 6 residues coordinate Ca(2+): D215, N217, N219, E221, D223, and E224. Residue N235 coordinates substrate. 4 residues coordinate Ca(2+): D263, F264, D267, and N268. 6 residues coordinate substrate: W314, N318, K353, W384, R419, and E423.

This sequence belongs to the bacterial solute-binding protein 1 family. As to quaternary structure, the complex is composed of two ATP-binding proteins (MsmK), two transmembrane proteins (FusB and FusC) and a solute-binding protein (FusA).

The protein localises to the cell membrane. Functionally, part of the ABC transporter complex FusABC-MsmK involved in short- and long-chain fructooligosaccharide (FOS) import. Required for the utilization of long-chain FOSs. Binds kestose, nystose, fructofuranosyl-nystose and inulin, but not sucrose. Has a preference for long-chain FOSs (tetrasaccharides and larger). The protein is Fructooligosaccharide ABC transporter substrate-binding protein FusA of Streptococcus pneumoniae serotype 4 (strain ATCC BAA-334 / TIGR4).